We begin with the raw amino-acid sequence, 653 residues long: Macrolide export ATP-binding/permease protein MacB (653 aa).

An ABC transporter domain is found at 6–244 (LALSHICREF…AAASLPADKP (239 aa)). Residue 42 to 49 (GSSGSGKS) participates in ATP binding. 4 consecutive transmembrane segments (helical) span residues 277-297 (FLTMLGIIIGIAAVSSVVALG), 526-546 (LAFLVAAIAVISLVVGGIGVM), 587-607 (LGGIAGILIAVALGALLNLLL), and 617-637 (FSIGAAFLTSTAIGIFFGYFP).

This sequence belongs to the ABC transporter superfamily. Macrolide exporter (TC 3.A.1.122) family. Homodimer.

It is found in the cell inner membrane. Non-canonical ABC transporter that contains transmembrane domains (TMD), which form a pore in the inner membrane, and an ATP-binding domain (NBD), which is responsible for energy generation. Confers resistance against macrolides. The chain is Macrolide export ATP-binding/permease protein MacB from Bradyrhizobium diazoefficiens (strain JCM 10833 / BCRC 13528 / IAM 13628 / NBRC 14792 / USDA 110).